A 124-amino-acid polypeptide reads, in one-letter code: MARLVGVDLPRDKRMEIALTYIYGIGRTRSKEILAATGISPEQRSKDLTDDQVTQLREYIEATLKVEGDLRREVQADIRRKIEIGCYQGLRHRRGLPVRGQRTKTNARTRKGPKRTIAGKKKAR.

The interval 95 to 124 (GLPVRGQRTKTNARTRKGPKRTIAGKKKAR) is disordered.

This sequence belongs to the universal ribosomal protein uS13 family. Part of the 30S ribosomal subunit. Forms a loose heterodimer with protein S19. Forms two bridges to the 50S subunit in the 70S ribosome.

In terms of biological role, located at the top of the head of the 30S subunit, it contacts several helices of the 16S rRNA. In the 70S ribosome it contacts the 23S rRNA (bridge B1a) and protein L5 of the 50S subunit (bridge B1b), connecting the 2 subunits; these bridges are implicated in subunit movement. Contacts the tRNAs in the A and P-sites. The protein is Small ribosomal subunit protein uS13 of Mycobacteroides abscessus (strain ATCC 19977 / DSM 44196 / CCUG 20993 / CIP 104536 / JCM 13569 / NCTC 13031 / TMC 1543 / L948) (Mycobacterium abscessus).